The primary structure comprises 66 residues: Cold shock-like protein CspD (66 aa).

A CSD domain is found at 4–63 (GKVKWFNSEKGFGFIEVEGGDDVFVHFSAIQGDGFKTLEEGQEVSFEIVEGNRGPQAANV).

Homodimer.

The protein resides in the cytoplasm. This Bacillus anthracis protein is Cold shock-like protein CspD (cspD).